The primary structure comprises 425 residues: Histidine--tRNA ligase (425 aa).

It belongs to the class-II aminoacyl-tRNA synthetase family. In terms of assembly, homodimer.

It localises to the cytoplasm. The enzyme catalyses tRNA(His) + L-histidine + ATP = L-histidyl-tRNA(His) + AMP + diphosphate + H(+). In Listeria monocytogenes serotype 4b (strain F2365), this protein is Histidine--tRNA ligase.